A 223-amino-acid chain; its full sequence is Keratin-associated protein 5-4 (223 aa).

14 tandem repeats follow at residues 21–24 (CCKP), 27–30 (CCVP), 79–82 (CCKP), 89–92 (CCKP), 107–110 (CCKP), 117–120 (CCKP), 135–138 (CCKP), 145–148 (CCKP), 155–158 (CCKP), 173–176 (CCKP), 183–186 (CCKP), 193–196 (CCKP), 203–206 (CCKP), and 213–216 (CCAP). Positions 21–216 (CCKPVCCCVP…CCCQSSCCAP (196 aa)) are 14 X 4 AA repeats of C-C-X-P.

It belongs to the KRTAP type 5 family. In terms of assembly, interacts with hair keratins. Expressed during the active phases of the hair cycle in the medulla and the inner root sheath of the forming hair. Also expressed in the upper layers of the epidermis of skin.

In the hair cortex, hair keratin intermediate filaments are embedded in an interfilamentous matrix, consisting of hair keratin-associated protein (KRTAP), which are essential for the formation of a rigid and resistant hair shaft through their extensive disulfide bond cross-linking with abundant cysteine residues of hair keratins. The matrix proteins include the high-sulfur and high-glycine-tyrosine keratins. The sequence is that of Keratin-associated protein 5-4 from Mus musculus (Mouse).